A 196-amino-acid polypeptide reads, in one-letter code: MSTLPSTDPPPLPASTSSQQPAVHIPPPSYLDPTTYPQTLYLDPERIFIELTYHPLSPSTYLAHTRSPAAGANVLFLGTTRDTFEDKPVARLAYTSYAPLALRTLSSIARDAVAKHGLCGVSIAHRLGDVAVGEESIAIAISAPHRGAAWRAGEEVLEECKRRVEIWKREEFVGEPPGQGEWRANRDTDPEGKSTS.

Positions 1–29 are disordered; it reads MSTLPSTDPPPLPASTSSQQPAVHIPPPS. Residues 145-146, lysine 161, and 168-170 contribute to the substrate site; these read HR and KRE. Positions 174-196 are disordered; it reads GEPPGQGEWRANRDTDPEGKSTS. The span at 183–196 shows a compositional bias: basic and acidic residues; it reads RANRDTDPEGKSTS.

This sequence belongs to the MoaE family. MOCS2B subfamily. Heterotetramer; composed of 2 small (MOCS2A) and 2 large (MOCS2B) subunits.

The protein resides in the cytoplasm. The catalysed reaction is 2 [molybdopterin-synthase sulfur-carrier protein]-C-terminal-Gly-aminoethanethioate + cyclic pyranopterin phosphate + H2O = molybdopterin + 2 [molybdopterin-synthase sulfur-carrier protein]-C-terminal Gly-Gly + 2 H(+). Its pathway is cofactor biosynthesis; molybdopterin biosynthesis. In terms of biological role, catalytic subunit of the molybdopterin synthase complex, a complex that catalyzes the conversion of precursor Z into molybdopterin. Acts by mediating the incorporation of 2 sulfur atoms from thiocarboxylated MOCS2A into precursor Z to generate a dithiolene group. This is Molybdopterin synthase catalytic subunit from Coccidioides immitis (strain RS) (Valley fever fungus).